The sequence spans 1149 residues: ATP-dependent helicase/deoxyribonuclease subunit B (1149 aa).

8 to 15 serves as a coordination point for ATP; that stretch reads GRAGTGKT. Cysteine 784, cysteine 1102, cysteine 1105, and cysteine 1111 together coordinate [4Fe-4S] cluster.

The protein belongs to the helicase family. AddB/RexB type 1 subfamily. In terms of assembly, heterodimer of AddA and AddB. Requires Mg(2+) as cofactor. It depends on [4Fe-4S] cluster as a cofactor.

Functionally, the heterodimer acts as both an ATP-dependent DNA helicase and an ATP-dependent, dual-direction single-stranded exonuclease. Recognizes the chi site generating a DNA molecule suitable for the initiation of homologous recombination. The AddB subunit has 5' -&gt; 3' nuclease activity but not helicase activity. The sequence is that of ATP-dependent helicase/deoxyribonuclease subunit B from Thermoanaerobacter pseudethanolicus (strain ATCC 33223 / 39E) (Clostridium thermohydrosulfuricum).